The following is a 326-amino-acid chain: Protein TMED8 (326 aa).

The disordered stretch occupies residues 1 to 80 (MSDLQAAEGP…VSPGSKDATE (80 aa)). Positions 160 to 324 (PPCIWTFAKV…NKTLYFHIYY (165 aa)) constitute a GOLD domain. Position 170 is an N6-acetyllysine (Lys-170). The disordered stretch occupies residues 238-268 (DSCDDEDEEEEEEEEIEEPVPAGDVERGSRS). Positions 239 to 255 (SCDDEDEEEEEEEEIEE) are enriched in acidic residues.

This Pongo abelii (Sumatran orangutan) protein is Protein TMED8 (TMED8).